Consider the following 193-residue polypeptide: Major intrinsically disordered NOTCH2-binding receptor 1-like homolog (193 aa).

Ser-82 carries the post-translational modification Phosphoserine. Asn-128 carries N-linked (GlcNAc...) asparagine glycosylation. Residues Gly-172–Phe-192 traverse the membrane as a helical segment.

This sequence belongs to the MINAR family. As to quaternary structure, interacts with NOTCH2. As to expression, widely expressed in the cortex and Purkinje cells of cerebellum. Expressed in the inner ear, mainly in the hair cells, spiral ganglia, the spiral limbus, and the stria vascularis.

The protein localises to the lysosome membrane. Its subcellular location is the endoplasmic reticulum membrane. Its function is as follows. Binds cholesterol and may regulate the distribution and homeostasis of cholesterol in hair cells. May play a role in angiogenesis. The polypeptide is Major intrinsically disordered NOTCH2-binding receptor 1-like homolog (Mus musculus (Mouse)).